The primary structure comprises 238 residues: Pyridoxine 5'-phosphate synthase (238 aa).

Asn-7 and Arg-18 together coordinate 3-amino-2-oxopropyl phosphate. The active-site Proton acceptor is the His-43. 1-deoxy-D-xylulose 5-phosphate is bound by residues Arg-45 and His-50. Glu-70 acts as the Proton acceptor in catalysis. Thr-100 contacts 1-deoxy-D-xylulose 5-phosphate. His-190 acts as the Proton donor in catalysis. Residues Asp-191 and 213-214 each bind 3-amino-2-oxopropyl phosphate; that span reads GH.

Belongs to the PNP synthase family. In terms of assembly, homooctamer; tetramer of dimers.

Its subcellular location is the cytoplasm. It catalyses the reaction 3-amino-2-oxopropyl phosphate + 1-deoxy-D-xylulose 5-phosphate = pyridoxine 5'-phosphate + phosphate + 2 H2O + H(+). The protein operates within cofactor biosynthesis; pyridoxine 5'-phosphate biosynthesis; pyridoxine 5'-phosphate from D-erythrose 4-phosphate: step 5/5. Catalyzes the complicated ring closure reaction between the two acyclic compounds 1-deoxy-D-xylulose-5-phosphate (DXP) and 3-amino-2-oxopropyl phosphate (1-amino-acetone-3-phosphate or AAP) to form pyridoxine 5'-phosphate (PNP) and inorganic phosphate. This is Pyridoxine 5'-phosphate synthase from Porphyromonas gingivalis (strain ATCC 33277 / DSM 20709 / CIP 103683 / JCM 12257 / NCTC 11834 / 2561).